The following is a 382-amino-acid chain: Lipid-A-disaccharide synthase (382 aa).

Belongs to the LpxB family.

The catalysed reaction is 2-N,3-O-bis[(3R)-3-hydroxytetradecanoyl]-alpha-D-glucosaminyl 1-phosphate + UDP-2-N,3-O-bis[(3R)-3-hydroxytetradecanoyl]-alpha-D-glucosamine = lipid A disaccharide (E. coli) + UDP + H(+). It catalyses the reaction a lipid X + a UDP-2-N,3-O-bis[(3R)-3-hydroxyacyl]-alpha-D-glucosamine = a lipid A disaccharide + UDP + H(+). It participates in glycolipid biosynthesis; lipid IV(A) biosynthesis; lipid IV(A) from (3R)-3-hydroxytetradecanoyl-[acyl-carrier-protein] and UDP-N-acetyl-alpha-D-glucosamine: step 5/6. Functionally, condensation of UDP-2,3-diacylglucosamine and 2,3-diacylglucosamine-1-phosphate to form lipid A disaccharide, a precursor of lipid A, a phosphorylated glycolipid that anchors the lipopolysaccharide to the outer membrane of the cell. The polypeptide is Lipid-A-disaccharide synthase (Enterobacter sp. (strain 638)).